We begin with the raw amino-acid sequence, 468 residues long: 6-phospho-beta-galactosidase (468 aa).

Residues Q19, H116, N159, E160, and N297 each coordinate D-galactose 6-phosphate. Catalysis depends on E160, which acts as the Proton donor. The active-site Nucleophile is the E375. 4 residues coordinate D-galactose 6-phosphate: S428, W429, K435, and Y437.

The protein belongs to the glycosyl hydrolase 1 family.

The catalysed reaction is a 6-phospho-beta-D-galactoside + H2O = D-galactose 6-phosphate + an alcohol. It participates in carbohydrate metabolism; lactose degradation; D-galactose 6-phosphate and beta-D-glucose from lactose 6-phosphate: step 1/1. This is 6-phospho-beta-galactosidase from Streptococcus pyogenes serotype M3 (strain ATCC BAA-595 / MGAS315).